A 442-amino-acid chain; its full sequence is Chromosomal replication initiator protein DnaA (442 aa).

Residues 1–75 are domain I, interacts with DnaA modulators; the sequence is MDAWPRCLER…GNGEVALAVG (75 aa). Positions 75–104 are domain II; sequence GSRPRAPEPLPAPQAVASAPAAAPIVPFAG. The segment at 105-322 is domain III, AAA+ region; it reads NLDSHYTFAN…GALNTLVARA (218 aa). ATP contacts are provided by G150, G152, K153, and T154. The segment at 323–442 is domain IV, binds dsDNA; the sequence is NFTGRSITVE…WEKLIRKLSE (120 aa).

It belongs to the DnaA family. In terms of assembly, oligomerizes as a right-handed, spiral filament on DNA at oriC.

The protein localises to the cytoplasm. In terms of biological role, plays an essential role in the initiation and regulation of chromosomal replication. ATP-DnaA binds to the origin of replication (oriC) to initiate formation of the DNA replication initiation complex once per cell cycle. Binds the DnaA box (a 9 base pair repeat at the origin) and separates the double-stranded (ds)DNA. Forms a right-handed helical filament on oriC DNA; dsDNA binds to the exterior of the filament while single-stranded (ss)DNA is stabiized in the filament's interior. The ATP-DnaA-oriC complex binds and stabilizes one strand of the AT-rich DNA unwinding element (DUE), permitting loading of DNA polymerase. After initiation quickly degrades to an ADP-DnaA complex that is not apt for DNA replication. Binds acidic phospholipids. In Xanthomonas campestris pv. campestris (strain 8004), this protein is Chromosomal replication initiator protein DnaA.